A 319-amino-acid polypeptide reads, in one-letter code: sn-1-specific diacylglycerol lipase ABHD11 (319 aa).

A mitochondrion-targeting transit peptide spans 1 to 28 (MTLKLAVLRQIFQGSKGWHLWQHWRAFY). The AB hydrolase-1 domain maps to 69–304 (PPLVLLHGLF…GAGHWVHADK (236 aa)). Residues serine 143, glutamate 239, and histidine 298 each act as charge relay system in the active site.

Belongs to the AB hydrolase superfamily. Post-translationally, phosphorylated.

It is found in the mitochondrion. The protein resides in the mitochondrion matrix. It catalyses the reaction 1-octadecanoyl-2-(5Z,8Z,11Z,14Z-eicosatetraenoyl)-sn-glycerol + H2O = 2-(5Z,8Z,11Z,14Z-eicosatetraenoyl)-glycerol + octadecanoate + H(+). The catalysed reaction is a 1,2-diacyl-sn-glycerol + H2O = a 2-acylglycerol + a fatty acid + H(+). It carries out the reaction a 1,3-diacyl-sn-glycerol + H2O = a 1-acyl-sn-glycerol + a fatty acid + H(+). The enzyme catalyses 1-octadecanoyl-2-(9Z-octadecenoyl)-sn-glycerol + H2O = 2-(9Z-octadecenoyl)-glycerol + octadecanoate + H(+). It catalyses the reaction 1-octadecanoyl-2-(4Z,7Z,10Z,13Z,16Z,19Z-docosahexaenoyl)-sn-glycerol + H2O = 2-(4Z,7Z,10Z,13Z,16Z,19Z-docosahexaenoyl)-glycerol + octadecanoate + H(+). The catalysed reaction is 1,2-didecanoylglycerol + H2O = decanoylglycerol + decanoate + H(+). Its function is as follows. Catalyzes the hydrolysis of diacylglycerol in vitro and may function as a key regulator in lipid metabolism, namely by regulating the intracellular levels of diacylglycerol. 1,2-diacyl-sn-glycerols are the preferred substrate over 1,3-diacyl-sn-glycerols. The enzyme hydrolyzes stearate in preference to palmitate from the sn-1 position of 1,2-diacyl-sn-glycerols. The chain is sn-1-specific diacylglycerol lipase ABHD11 from Xenopus tropicalis (Western clawed frog).